We begin with the raw amino-acid sequence, 399 residues long: Dual-specificity RNA methyltransferase RlmN (399 aa).

The active-site Proton acceptor is Glu-120. The Radical SAM core domain maps to 126 to 367; the sequence is EEGRGTLCVS…SPVRTPRGRD (242 aa). Cys-133 and Cys-372 are oxidised to a cystine. 3 residues coordinate [4Fe-4S] cluster: Cys-140, Cys-144, and Cys-147. Residues 198–199, Ser-230, 252–254, and Asn-329 contribute to the S-adenosyl-L-methionine site; these read GE and SLH. The active-site S-methylcysteine intermediate is Cys-372.

This sequence belongs to the radical SAM superfamily. RlmN family. [4Fe-4S] cluster is required as a cofactor.

The protein resides in the cytoplasm. It carries out the reaction adenosine(2503) in 23S rRNA + 2 reduced [2Fe-2S]-[ferredoxin] + 2 S-adenosyl-L-methionine = 2-methyladenosine(2503) in 23S rRNA + 5'-deoxyadenosine + L-methionine + 2 oxidized [2Fe-2S]-[ferredoxin] + S-adenosyl-L-homocysteine. The enzyme catalyses adenosine(37) in tRNA + 2 reduced [2Fe-2S]-[ferredoxin] + 2 S-adenosyl-L-methionine = 2-methyladenosine(37) in tRNA + 5'-deoxyadenosine + L-methionine + 2 oxidized [2Fe-2S]-[ferredoxin] + S-adenosyl-L-homocysteine. In terms of biological role, specifically methylates position 2 of adenine 2503 in 23S rRNA and position 2 of adenine 37 in tRNAs. m2A2503 modification seems to play a crucial role in the proofreading step occurring at the peptidyl transferase center and thus would serve to optimize ribosomal fidelity. This is Dual-specificity RNA methyltransferase RlmN from Parvibaculum lavamentivorans (strain DS-1 / DSM 13023 / NCIMB 13966).